Consider the following 154-residue polypeptide: Egg-lysin (154 aa).

A signal peptide spans 1–18 (MKLLVLCIFAMMATLAMS).

As to quaternary structure, homodimer. Sperm.

Its function is as follows. Dissolves the egg vitelline layer nonenzymatically during fertilization. It creates a hole of about 3 mu-m in diameter through which the sperm pass. The sequence is that of Egg-lysin from Haliotis walallensis (Flat abalone).